The sequence spans 513 residues: Coniferin beta-glucosidase (513 aa).

Positions 1 to 23 (MEVSVLMWVLLFYSLLGFQVTTA) are cleaved as a signal peptide. Residues Gln-44, His-145, and 190-191 (NE) each bind a beta-D-glucoside. Catalysis depends on Glu-191, which acts as the Proton donor. Cys-210 and Cys-219 form a disulfide bridge. N-linked (GlcNAc...) asparagine glycosylation occurs at Asn-223. Residues Tyr-336 and Glu-408 each coordinate a beta-D-glucoside. Glu-408 functions as the Nucleophile in the catalytic mechanism. Asn-447 is a glycosylation site (N-linked (GlcNAc...) asparagine). A beta-D-glucoside contacts are provided by residues Trp-457, 464-465 (EW), and Phe-473.

It belongs to the glycosyl hydrolase 1 family. As to quaternary structure, homodimer. In terms of processing, glycosylated.

The catalysed reaction is 4-O-(beta-D-glucosyl)-(E)-coniferol + H2O = (E)-coniferol + D-glucose. Inhibited by glucono-1,5-lactone, but not by bromoconduritol or conduritol B epoxide. In terms of biological role, involved in the release of monolignols for lignin biosynthesis. Unable to hydrolyze 4-nitrophenyl beta-cellobioside or alpha-linked methylumbelliferyl glucoside. The sequence is that of Coniferin beta-glucosidase from Pinus contorta (Shore pine).